Reading from the N-terminus, the 155-residue chain is Telokin-like protein 20 homolog (155 aa).

The segment at Lys109–Asp155 is disordered.

This is Telokin-like protein 20 homolog from Orgyia pseudotsugata multicapsid polyhedrosis virus (OpMNPV).